The chain runs to 191 residues: Leucyl/phenylalanyl-tRNA--protein transferase (191 aa).

Belongs to the L/F-transferase family.

Its subcellular location is the cytoplasm. The enzyme catalyses N-terminal L-lysyl-[protein] + L-leucyl-tRNA(Leu) = N-terminal L-leucyl-L-lysyl-[protein] + tRNA(Leu) + H(+). It catalyses the reaction N-terminal L-arginyl-[protein] + L-leucyl-tRNA(Leu) = N-terminal L-leucyl-L-arginyl-[protein] + tRNA(Leu) + H(+). It carries out the reaction L-phenylalanyl-tRNA(Phe) + an N-terminal L-alpha-aminoacyl-[protein] = an N-terminal L-phenylalanyl-L-alpha-aminoacyl-[protein] + tRNA(Phe). Functionally, functions in the N-end rule pathway of protein degradation where it conjugates Leu, Phe and, less efficiently, Met from aminoacyl-tRNAs to the N-termini of proteins containing an N-terminal arginine or lysine. The polypeptide is Leucyl/phenylalanyl-tRNA--protein transferase (Herpetosiphon aurantiacus (strain ATCC 23779 / DSM 785 / 114-95)).